The chain runs to 672 residues: DNA ligase (672 aa).

Residues 34–38 (DAEYD), 83–84 (SL), and glutamate 117 contribute to the NAD(+) site. Lysine 119 functions as the N6-AMP-lysine intermediate in the catalytic mechanism. NAD(+) is bound by residues arginine 140, glutamate 177, lysine 293, and lysine 317. Residues cysteine 411, cysteine 414, cysteine 429, and cysteine 434 each coordinate Zn(2+). Residues 591–672 (RVGGRFTGKT…FLAMLGVCRT (82 aa)) form the BRCT domain.

It belongs to the NAD-dependent DNA ligase family. LigA subfamily. The cofactor is Mg(2+). Requires Mn(2+) as cofactor.

The enzyme catalyses NAD(+) + (deoxyribonucleotide)n-3'-hydroxyl + 5'-phospho-(deoxyribonucleotide)m = (deoxyribonucleotide)n+m + AMP + beta-nicotinamide D-nucleotide.. Functionally, DNA ligase that catalyzes the formation of phosphodiester linkages between 5'-phosphoryl and 3'-hydroxyl groups in double-stranded DNA using NAD as a coenzyme and as the energy source for the reaction. It is essential for DNA replication and repair of damaged DNA. The protein is DNA ligase of Geotalea uraniireducens (strain Rf4) (Geobacter uraniireducens).